We begin with the raw amino-acid sequence, 356 residues long: Replication factor C subunit 3 (356 aa).

An N6-acetyllysine modification is found at Lys-20. Ser-125 is subject to Phosphoserine.

Belongs to the activator 1 small subunits family. Subunit of the RFC complex, an heteropentameric complex consisting of a large subunit RFC1 and four small subunits RFC2, RFC3, RFC4 and RFC5; the RFC complex interacts with PCNA. Forms an heterotetrameric complex with RFC2, RFC4 and RFC5; this complex has ATPase activity but is not stimulated by PCNA. The heterotetramer of subunits RFC2, RFC3, RFC4 and RFC5 interacts with RAD17. Interacts with CNTD1; this interaction facilitates crossover formation.

The protein localises to the nucleus. In terms of biological role, subunit of the replication factor C (RFC) complex which acts during elongation of primed DNA templates by DNA polymerases delta and epsilon, and is necessary for ATP-dependent loading of proliferating cell nuclear antigen (PCNA) onto primed DNA. This Homo sapiens (Human) protein is Replication factor C subunit 3 (RFC3).